An 855-amino-acid polypeptide reads, in one-letter code: DNA mismatch repair protein MutS (855 aa).

616 to 623 lines the ATP pocket; that stretch reads GPNMGGKS.

Belongs to the DNA mismatch repair MutS family.

Functionally, this protein is involved in the repair of mismatches in DNA. It is possible that it carries out the mismatch recognition step. This protein has a weak ATPase activity. The protein is DNA mismatch repair protein MutS of Salmonella paratyphi C (strain RKS4594).